The following is a 73-amino-acid chain: Protein SlyX homolog (73 aa).

This sequence belongs to the SlyX family.

This Histophilus somni (strain 129Pt) (Haemophilus somnus) protein is Protein SlyX homolog.